A 584-amino-acid polypeptide reads, in one-letter code: Pectinesterase 3 (584 aa).

The N-terminal stretch at 1-50 (MTRIKEFFTKLSESSTNQNISNIPKKKKKLFLALFATLLVVAAVIGIVAG) is a signal peptide. Positions 51-266 (VNSRKNSGDN…LSTGDRRLLQ (216 aa)) are excised as a propeptide. Asn-108, Asn-129, and Asn-226 each carry an N-linked (GlcNAc...) asparagine glycan. Thr-348 and Gln-378 together coordinate substrate. The active-site Proton donor is the Asp-401. Residues Cys-415 and Cys-435 are joined by a disulfide bond. Asp-422 (nucleophile) is an active-site residue. Substrate-binding residues include Arg-490 and Trp-492.

In the N-terminal section; belongs to the PMEI family. This sequence in the C-terminal section; belongs to the pectinesterase family. As to expression, in the peel, expression is localized to the region of the flavedo close to the oil glands, and to the innermost layer of the albedo. In the lamella, expression is localized to the cell layers opposing the fruit tissue, and to the parenchyma surrounding the vascular tissue. In the fruit vesicles, expression is restricted to the peripheral cell layers and stalk cells. High levels of expression are detected in the core matrix.

The protein resides in the secreted. It localises to the cell wall. It catalyses the reaction [(1-&gt;4)-alpha-D-galacturonosyl methyl ester](n) + n H2O = [(1-&gt;4)-alpha-D-galacturonosyl](n) + n methanol + n H(+). It functions in the pathway glycan metabolism; pectin degradation; 2-dehydro-3-deoxy-D-gluconate from pectin: step 1/5. Acts in the modification of cell walls via demethylesterification of cell wall pectin. In Citrus sinensis (Sweet orange), this protein is Pectinesterase 3.